The following is a 1056-amino-acid chain: Potassium transporter TRK1 (1056 aa).

The Cytoplasmic segment spans residues 1-46; sequence MLYRVSGFYKRHTRNFTNIDYGYYIRNFIHHIASKIYPYAKVVLPN. The chain crosses the membrane as a helical span at residues 47 to 67; sequence FRAAHYFYILTLVILGSILVY. Residues 68–73 lie on the Extracellular side of the membrane; it reads PVKTCA. The stretch at 74 to 90 is an intramembrane region; that stretch reads YIDVLFFTAGASTQAGL. Residues 91 to 99 lie on the Extracellular side of the membrane; that stretch reads NTVNVNDLS. The chain crosses the membrane as a helical span at residues 100 to 122; the sequence is LYQQIVLYLLATLATPIFIHGSL. The Cytoplasmic segment spans residues 123–622; it reads LFVRLYYFER…LGGIEYRAVK (500 aa). Disordered regions lie at residues 180–276, 290–350, and 404–571; these read REAE…IDPE, KNQE…EDED, and PWTS…SIEN. The span at 186-203 shows a compositional bias: low complexity; sequence SSSSPQSSSSQTSQPVST. Residues 236-245 show a composition bias toward basic and acidic residues; the sequence is EKIHFEEPQR. The segment covering 335–344 has biased composition (polar residues); the sequence is PATNSVGTGN. Positions 412 to 423 are enriched in low complexity; sequence TLSNSSKKGSLS. 2 stretches are compositionally biased toward acidic residues: residues 428–449 and 469–487; these read DTEDDSEDEEYASIDSETSDIS and YEEDEDEDEHNSDDDDDGE. Residues 521–533 are compositionally biased toward polar residues; that stretch reads RSNTLDTPQQNTS. A compositionally biased stretch (basic residues) spans 537–549; it reads KIRKKAPKRKTPR. The segment covering 553 to 563 has biased composition (polar residues); that stretch reads NASFNQHSNVS. A helical transmembrane segment spans residues 623 to 646; it reads LLIKIIVVYYVGFNIIPGVMLSIW. Residues 647–665 lie on the Extracellular side of the membrane; sequence IYCMPHYKNLMISSSISPA. Residues 666–682 lie within the membrane without spanning it; that stretch reads WWAFFTSQSSFNDLGLT. Topologically, residues 683–693 are extracellular; the sequence is LTSNSMMSFNQ. Residues 694–710 traverse the membrane as a helical segment; the sequence is NAFVQILCSFLIVIGNT. The Cytoplasmic portion of the chain corresponds to 711-754; that stretch reads GFPILLRFIIWVMFKTARPLSLYKESLGFLLDHPRRCFTLLFPS. A helical membrane pass occupies residues 755 to 778; sequence VPTWWLFFILVVLNGFDLVIFCIL. At 779–793 the chain is on the extracellular side; sequence DLHDDTFKGVDMGYR. The stretch at 794 to 810 is an intramembrane region; that stretch reads VLNGLFQAFCTRTVGFS. At 811–817 the chain is on the extracellular side; that stretch reads VMDLSQL. The helical transmembrane segment at 818 to 841 threads the bilayer; sequence HAATQVSYLIMMYISVLPIAISVR. Topologically, residues 842–874 are cytoplasmic; it reads RTNVYEEQSLGVYAKENAEGVDESAPSNYVGSH. The chain crosses the membrane as a helical span at residues 875–896; that stretch reads LRNQLSYDLWYICLGLFIICIA. Topologically, residues 897-909 are extracellular; it reads EGKRLKEQDLRFS. An intramembrane segment occupies 910 to 928; the sequence is IFAVLFEIVSAYGTVGMSM. Residues 929–942 lie on the Extracellular side of the membrane; sequence GYPGVDCSLSGEFN. Residues 943-965 form a helical membrane-spanning segment; sequence VISKLVIIAMMIRGRHRGLPYTI. Residues 966 to 1056 are Cytoplasmic-facing; it reads DRAIMLPNAA…RYVVRTVSEV (91 aa).

This sequence belongs to the TrkH potassium transport family.

The protein resides in the cell membrane. It carries out the reaction K(+)(in) = K(+)(out). It catalyses the reaction chloride(in) = chloride(out). TRK1-mediated chloride conductance is blocked by 4,4'-diisothiocyanatostilbene-2,2'-disulfonic acid. In terms of biological role, potassium transporter that mediates K(+) influx, as well as Cl(-) efflux as a secondary function. TRK1 is the major K(+) uptake transporter that regulates membrane potential and intracellular pH. The TRK1-mediated Cl(-) efflux should serve as a Cl(-) detoxification route and may play a role in sustaining C.albicans on mammalian epithelial surfaces, or in physiological saline solutions such as saliva. Functionally, mediates candidacidal activities of cysteine-free peptides, but not of defensins. The hallmark of salivary gland-secreted histatin-5 (Hst 5) killing of C.albicans is the rapid efflux of cellular ATP and other small nucleotides and ions from the cell as well as concurrent intracellular uptake of propidium iodide (PI). TRK1 is the channel for Hst 5-induced killing and histatin-5 may directly or indirectly alter TRK1 function, allowing the efflux of larger anions, including ATP, and the influx of small cationic dyes, such as PI. The sequence is that of Potassium transporter TRK1 from Candida albicans (strain SC5314 / ATCC MYA-2876) (Yeast).